Reading from the N-terminus, the 51-residue chain is Large ribosomal subunit protein eL39z (51 aa).

It belongs to the eukaryotic ribosomal protein eL39 family.

The chain is Large ribosomal subunit protein eL39z (RPL39A) from Oryza sativa subsp. japonica (Rice).